The primary structure comprises 168 residues: 6-pyruvoyl tetrahydrobiopterin synthase (168 aa).

A Zn(2+)-binding site is contributed by His-19. The active-site Proton acceptor is Cys-38. Residues His-44 and His-46 each coordinate Zn(2+). Catalysis depends on charge relay system residues His-85 and Glu-130. Ser-159 is subject to Phosphoserine. Residue Thr-161 is modified to Phosphothreonine. Phosphoserine is present on residues Ser-164, Ser-165, and Ser-167.

Belongs to the PTPS family. As to quaternary structure, homohexamer formed of two homotrimers in a head to head fashion. It depends on Zn(2+) as a cofactor.

The enzyme catalyses 7,8-dihydroneopterin 3'-triphosphate = 6-pyruvoyl-5,6,7,8-tetrahydropterin + triphosphate + H(+). It functions in the pathway cofactor biosynthesis; tetrahydrobiopterin biosynthesis; tetrahydrobiopterin from 7,8-dihydroneopterin triphosphate: step 1/3. In terms of biological role, required for pigment and biopterin synthesis. The chain is 6-pyruvoyl tetrahydrobiopterin synthase (pr) from Drosophila melanogaster (Fruit fly).